Reading from the N-terminus, the 436-residue chain is MTLKKLSYRLAAASALSFFVTSNAFAATEIQWWHAMTGANNEVVDTLAKEFNDSQKDYKITPVFKGTYPETLNAGIAAFRAKQPPAIIQVFDAGSGVMMGAAGAIKPVADVLKEGGYTFNKDEYLAGIVAYYSKPDGTMLSFPYNSSSPILYYNKDIFQKAGLDAANPPKTWPEVFEAAKKIKTSGAAQCGFTSTWLTWIQTENFAAWNNVSYGSNENGLGGTDVKLAVNAPLFVEHFQAIADLAKDGTFRYGGRTSEAKQLFMSGECGILTESSGGLGDIVKTGMNYGIGQLPYYEGHGPQNTIPGGASLWVFGGKSDAEYKGVAEFFHFLSQTKIQSRLHQVSGYMPVTIAAYEETKKSGFYDKNPARETPLLQMMGKPPTENSKGVRLVNLPQVRDIMNEEFEAMLAGKQDAKAALDKIVERGDAAIKQAAGN.

An N-terminal signal peptide occupies residues 1–26 (MTLKKLSYRLAAASALSFFVTSNAFA). Sn-glycerol 3-phosphate contacts are provided by Tyr68, Asp92, Ser147, Ser274, Gly308, Tyr347, and Arg398.

The protein belongs to the bacterial solute-binding protein 1 family. In terms of assembly, the complex is composed of two ATP-binding proteins (UgpC), two transmembrane proteins (UgpA and UgpE) and a solute-binding protein (UgpB).

The protein localises to the periplasm. In terms of biological role, part of the ABC transporter complex UgpBAEC involved in sn-glycerol-3-phosphate (G3P) import. Binds G3P. This chain is sn-glycerol-3-phosphate-binding periplasmic protein UgpB (ugpB), found in Agrobacterium fabrum (strain C58 / ATCC 33970) (Agrobacterium tumefaciens (strain C58)).